Consider the following 124-residue polypeptide: MVIKRGFIGNTPKPSRCKRTKPIFREPNSPVNGGLVYNHPLHTAAAVKEAFSENRGFRTCHVCHRKNNMRLKVGTCESCKKHTCAICIRQCHKCESNVCSMCSKQERTFESEAFCPSCYPLDTY.

The protein resides in the cytoplasm. It localises to the nucleus. This is an uncharacterized protein from Schizosaccharomyces pombe (strain 972 / ATCC 24843) (Fission yeast).